The following is a 37-amino-acid chain: Large ribosomal subunit protein bL36 (37 aa).

This sequence belongs to the bacterial ribosomal protein bL36 family.

The chain is Large ribosomal subunit protein bL36 from Nocardioides sp. (strain ATCC BAA-499 / JS614).